A 334-amino-acid polypeptide reads, in one-letter code: GTPase Obg (334 aa).

Residues 1–159 form the Obg domain; sequence MRFVDEVVIK…KEVRLELNLL (159 aa). In terms of domain architecture, OBG-type G spans 160–331; the sequence is ADVALLGLPN…LAKKLNEFLQ (172 aa). Residues 166-173, 191-195, 212-215, 282-285, and 312-314 contribute to the GTP site; these read GLPNAGKS, FTTMY, DIPG, NKID, and SAA. Mg(2+) is bound by residues Ser-173 and Thr-193.

Belongs to the TRAFAC class OBG-HflX-like GTPase superfamily. OBG GTPase family. In terms of assembly, monomer. The cofactor is Mg(2+).

The protein localises to the cytoplasm. In terms of biological role, an essential GTPase which binds GTP, GDP and possibly (p)ppGpp with moderate affinity, with high nucleotide exchange rates and a fairly low GTP hydrolysis rate. Plays a role in control of the cell cycle, stress response, ribosome biogenesis and in those bacteria that undergo differentiation, in morphogenesis control. This is GTPase Obg from Francisella tularensis subsp. tularensis (strain FSC 198).